The chain runs to 288 residues: Cell division protein DivIB (288 aa).

Topologically, residues 1 to 25 are cytoplasmic; it reads MEKVIDITERVPAMKKRRRRRTNFK. A helical transmembrane segment spans residues 26–46; it reads FLALVTIFLFIIIILLYFQLP. Residues 47–288 lie on the Extracellular side of the membrane; that stretch reads YSDIKKIDIK…LEEQNEEEPE (242 aa). The 69-residue stretch at 48–116 folds into the POTRA domain; it reads SDIKKIDIKG…NEVQITVEEW (69 aa). Residues 253–263 show a composition bias toward basic and acidic residues; it reads LIKENTEKTEE. The disordered stretch occupies residues 253–288; that stretch reads LIKENTEKTEEPAEETENADTEEGGQLEEQNEEEPE. Acidic residues predominate over residues 264-288; the sequence is PAEETENADTEEGGQLEEQNEEEPE.

Belongs to the FtsQ/DivIB family. DivIB subfamily.

Its subcellular location is the cell membrane. Functionally, cell division protein that may be involved in stabilizing or promoting the assembly of the division complex. The sequence is that of Cell division protein DivIB from Solibacillus silvestris (strain StLB046) (Bacillus silvestris).